Here is a 347-residue protein sequence, read N- to C-terminus: NADH-ubiquinone oxidoreductase chain 2 (347 aa).

The next 11 membrane-spanning stretches (helical) occupy residues 1–21 (MNPL…VIVM), 25–45 (HWLT…PMLM), 59–79 (YFLT…INLT), 96–116 (IIMT…FWVP), 127–147 (CLIL…MISP), 149–169 (INLN…GWGG), 178–198 (IMAY…AYNP), 200–220 (MTML…MLLI), 237–257 (IPLV…LPPL), 276–296 (IILP…YMRL), and 325–345 (LLSP…TMLL).

The protein belongs to the complex I subunit 2 family. In terms of assembly, core subunit of respiratory chain NADH dehydrogenase (Complex I) which is composed of 45 different subunits. Interacts with TMEM242.

The protein localises to the mitochondrion inner membrane. The catalysed reaction is a ubiquinone + NADH + 5 H(+)(in) = a ubiquinol + NAD(+) + 4 H(+)(out). Functionally, core subunit of the mitochondrial membrane respiratory chain NADH dehydrogenase (Complex I) which catalyzes electron transfer from NADH through the respiratory chain, using ubiquinone as an electron acceptor. Essential for the catalytic activity and assembly of complex I. This chain is NADH-ubiquinone oxidoreductase chain 2, found in Natalus tumidirostris (Trinidadian funnel-eared bat).